Reading from the N-terminus, the 125-residue chain is Small ribosomal subunit protein bS6 (125 aa).

Belongs to the bacterial ribosomal protein bS6 family.

In terms of biological role, binds together with bS18 to 16S ribosomal RNA. The polypeptide is Small ribosomal subunit protein bS6 (Baumannia cicadellinicola subsp. Homalodisca coagulata).